A 168-amino-acid polypeptide reads, in one-letter code: Mediator of RNA polymerase II transcription subunit 7a (168 aa).

Coiled coils occupy residues 64–92 (KDSN…ADVL) and 132–166 (IMEL…LTLD).

The protein belongs to the Mediator complex subunit 7 family. Component of the Mediator complex. Interacts with MEE14/CBP1.

The protein resides in the nucleus. Component of the Mediator complex, a coactivator involved in the regulated transcription of nearly all RNA polymerase II-dependent genes. Mediator functions as a bridge to convey information from gene-specific regulatory proteins to the basal RNA polymerase II transcription machinery. The Mediator complex, having a compact conformation in its free form, is recruited to promoters by direct interactions with regulatory proteins and serves for the assembly of a functional pre-initiation complex with RNA polymerase II and the general transcription factors. The sequence is that of Mediator of RNA polymerase II transcription subunit 7a (MED7A) from Arabidopsis thaliana (Mouse-ear cress).